Here is a 321-residue protein sequence, read N- to C-terminus: Lipoyl synthase (321 aa).

7 residues coordinate [4Fe-4S] cluster: C68, C73, C79, C94, C98, C101, and S308. A Radical SAM core domain is found at 80 to 297 (FNHGTATFMI…KAEALAMGFT (218 aa)).

It belongs to the radical SAM superfamily. Lipoyl synthase family. Requires [4Fe-4S] cluster as cofactor.

It localises to the cytoplasm. It catalyses the reaction [[Fe-S] cluster scaffold protein carrying a second [4Fe-4S](2+) cluster] + N(6)-octanoyl-L-lysyl-[protein] + 2 oxidized [2Fe-2S]-[ferredoxin] + 2 S-adenosyl-L-methionine + 4 H(+) = [[Fe-S] cluster scaffold protein] + N(6)-[(R)-dihydrolipoyl]-L-lysyl-[protein] + 4 Fe(3+) + 2 hydrogen sulfide + 2 5'-deoxyadenosine + 2 L-methionine + 2 reduced [2Fe-2S]-[ferredoxin]. Its pathway is protein modification; protein lipoylation via endogenous pathway; protein N(6)-(lipoyl)lysine from octanoyl-[acyl-carrier-protein]: step 2/2. Catalyzes the radical-mediated insertion of two sulfur atoms into the C-6 and C-8 positions of the octanoyl moiety bound to the lipoyl domains of lipoate-dependent enzymes, thereby converting the octanoylated domains into lipoylated derivatives. The polypeptide is Lipoyl synthase (Salmonella typhi).